The primary structure comprises 279 residues: Diaminopimelate epimerase (279 aa).

Substrate-binding residues include asparagine 13 and asparagine 66. The active-site Proton donor is cysteine 75. Substrate-binding positions include 76–77, asparagine 164, asparagine 197, and 215–216; these read GN and ER. The active-site Proton acceptor is the cysteine 224. 225–226 contributes to the substrate binding site; sequence GT.

Belongs to the diaminopimelate epimerase family. Homodimer.

Its subcellular location is the cytoplasm. The enzyme catalyses (2S,6S)-2,6-diaminopimelate = meso-2,6-diaminopimelate. Its pathway is amino-acid biosynthesis; L-lysine biosynthesis via DAP pathway; DL-2,6-diaminopimelate from LL-2,6-diaminopimelate: step 1/1. Its function is as follows. Catalyzes the stereoinversion of LL-2,6-diaminopimelate (L,L-DAP) to meso-diaminopimelate (meso-DAP), a precursor of L-lysine and an essential component of the bacterial peptidoglycan. In Nostoc punctiforme (strain ATCC 29133 / PCC 73102), this protein is Diaminopimelate epimerase.